Reading from the N-terminus, the 652-residue chain is Protein phosphatase Slingshot homolog 3 (652 aa).

A compositionally biased stretch (polar residues) spans 1–16 (MALVTVSRSPPASGHS). The segment at 1-31 (MALVTVSRSPPASGHSTPVGPTDRVIRRRGR) is disordered. The residue at position 2 (A2) is an N-acetylalanine. Phosphoserine is present on residues S9, S37, S85, and S87. The tract at residues 43–91 (GAVLGLQDGGEGNDAAEADPEPMEKPSGEEQPAEDQTDNGQGSQSPWKQ) is disordered. A compositionally biased stretch (polar residues) spans 80–90 (DNGQGSQSPWK). The DEK-C domain occupies 266–321 (EQMEQAILAELWQVLDASDLDSVTSKEIRQALELRLGCPLQQYRDFIDNQMLLLMA). A Tyrosine-protein phosphatase domain is found at 325 to 466 (RASRIFPHLY…LQTYQGILTA (142 aa)). Residue C410 is the Phosphocysteine intermediate of the active site. Disordered stretches follow at residues 484–526 (EPLA…LGLR), 540–580 (LLEP…KGGQ), and 610–652 (RAFQ…EGKA). Positions 540–552 (LLEPSSEPESTTE) are enriched in low complexity. The span at 642-652 (SVDDSREEGKA) shows a compositional bias: basic and acidic residues.

This sequence belongs to the protein-tyrosine phosphatase family. In terms of assembly, does not bind to, or colocalize with, filamentous actin.

It localises to the cytoplasm. The protein resides in the cytoskeleton. The protein localises to the nucleus. The catalysed reaction is O-phospho-L-tyrosyl-[protein] + H2O = L-tyrosyl-[protein] + phosphate. It carries out the reaction O-phospho-L-seryl-[protein] + H2O = L-seryl-[protein] + phosphate. It catalyses the reaction O-phospho-L-threonyl-[protein] + H2O = L-threonyl-[protein] + phosphate. Protein phosphatase which may play a role in the regulation of actin filament dynamics. Can dephosphorylate and activate the actin binding/depolymerizing factor cofilin, which subsequently binds to actin filaments and stimulates their disassembly. The chain is Protein phosphatase Slingshot homolog 3 (Ssh3) from Rattus norvegicus (Rat).